Here is a 118-residue protein sequence, read N- to C-terminus: Small ribosomal subunit protein mS41 (118 aa).

Residues 1–24 (MLRVVAKAQYPAAVRCFSTSHAAF) constitute a mitochondrion transit peptide.

This sequence belongs to the mitochondrion-specific ribosomal protein mS41 family.

The protein resides in the mitochondrion. In terms of biological role, involved in telomere length regulation. The polypeptide is Small ribosomal subunit protein mS41 (FYV4) (Yarrowia lipolytica (strain CLIB 122 / E 150) (Yeast)).